The primary structure comprises 657 residues: Chemoreceptor McpA (657 aa).

At Met-1–Arg-5 the chain is on the cytoplasmic side. Residues Leu-6–Met-29 traverse the membrane as a helical segment. At Ala-30–Gln-188 the chain is on the periplasmic side. Residues Ala-189–Phe-212 traverse the membrane as a helical segment. The Cytoplasmic portion of the chain corresponds to Leu-213–Phe-657. 2 consecutive HAMP domains span residues Met-216–Gln-269 and Gln-297–Lys-349. One can recognise a Methyl-accepting transducer domain in the interval Ser-354–Lys-583. A Glutamate methyl ester (Gln) modification is found at Gln-378. Glu-385 and Glu-392 each carry glutamate methyl ester (Glu). Gln-574 is subject to Glutamate methyl ester (Gln). The segment at Ala-634–Phe-657 is disordered.

This sequence belongs to the methyl-accepting chemotaxis (MCP) protein family.

It is found in the cell membrane. Chemotactic-signal transducers respond to changes in the concentration of attractants and repellents in the environment, transduce a signal from the outside to the inside of the cell, and facilitate sensory adaptation through the variation of the level of methylation. Attractants increase the level of methylation while repellents decrease the level of methylation. The polypeptide is Chemoreceptor McpA (mcpA) (Caulobacter vibrioides (strain ATCC 19089 / CIP 103742 / CB 15) (Caulobacter crescentus)).